Consider the following 409-residue polypeptide: Na(+)-translocating NADH-quinone reductase subunit F (409 aa).

The helical transmembrane segment at Phe-5–Phe-25 threads the bilayer. The 2Fe-2S ferredoxin-type domain maps to Gly-34–Ile-128. [2Fe-2S] cluster-binding residues include Cys-71, Cys-77, Cys-80, and Cys-112. An FAD-binding FR-type domain is found at Val-131 to Lys-271.

It belongs to the NqrF family. Composed of six subunits; NqrA, NqrB, NqrC, NqrD, NqrE and NqrF. It depends on [2Fe-2S] cluster as a cofactor. Requires FAD as cofactor.

Its subcellular location is the cell inner membrane. The enzyme catalyses a ubiquinone + n Na(+)(in) + NADH + H(+) = a ubiquinol + n Na(+)(out) + NAD(+). Its function is as follows. NQR complex catalyzes the reduction of ubiquinone-1 to ubiquinol by two successive reactions, coupled with the transport of Na(+) ions from the cytoplasm to the periplasm. The first step is catalyzed by NqrF, which accepts electrons from NADH and reduces ubiquinone-1 to ubisemiquinone by a one-electron transfer pathway. The chain is Na(+)-translocating NADH-quinone reductase subunit F from Haemophilus ducreyi (strain 35000HP / ATCC 700724).